We begin with the raw amino-acid sequence, 289 residues long: Probable endonuclease 4 (289 aa).

Residues His75, His115, Glu153, Asp187, His190, His224, Asp237, His239, and Glu269 each coordinate Zn(2+).

This sequence belongs to the AP endonuclease 2 family. It depends on Zn(2+) as a cofactor.

It catalyses the reaction Endonucleolytic cleavage to 5'-phosphooligonucleotide end-products.. Functionally, endonuclease IV plays a role in DNA repair. It cleaves phosphodiester bonds at apurinic or apyrimidinic (AP) sites, generating a 3'-hydroxyl group and a 5'-terminal sugar phosphate. This Chlamydia abortus (strain DSM 27085 / S26/3) (Chlamydophila abortus) protein is Probable endonuclease 4.